The sequence spans 240 residues: uncharacterized protein (240 aa).

The span at 1-11 shows a compositional bias: basic residues; the sequence is MGMTPRRKRRG. A disordered region spans residues 1 to 32; sequence MGMTPRRKRRGGAVQITRPTGRPRTPTTQTTK. Residues 17 to 31 are compositionally biased toward low complexity; it reads TRPTGRPRTPTTQTT. 6 helical membrane-spanning segments follow: residues 36 to 56, 93 to 113, 115 to 135, 146 to 166, 172 to 192, and 198 to 218; these read WVVG…VELI, LMAN…AGLS, FVWA…LIGN, IGAS…GLFV, IVIG…AMPV, and GVSW…AYLL.

It to M.leprae ML1171.

Its subcellular location is the cell membrane. This is an uncharacterized protein from Mycobacterium tuberculosis (strain CDC 1551 / Oshkosh).